The primary structure comprises 213 residues: Bcl-2-related ovarian killer protein (213 aa).

Ser7 carries the post-translational modification Phosphoserine. The tract at residues 15-45 (MDAFDRSPTDKELVAQAKALGREYVHARLLR) is interactions with ITPR1. Residues Lys25 and Lys32 each participate in a glycyl lysine isopeptide (Lys-Gly) (interchain with G-Cter in ubiquitin) cross-link. Positions 32 to 44 (KALGREYVHARLL) match the BH4 motif. Positions 67-83 (VCTVLLRLGDELEQIRP) match the BH3 motif. The segment at 71–79 (LLRLGDELE) is nuclear export signal. The short motif at 113-132 (HIFSAGITWGKVVSLYSVAA) is the BH1 element. Residues Lys160 and Lys177 each participate in a glycyl lysine isopeptide (Lys-Gly) (interchain with G-Cter in ubiquitin) cross-link. Positions 165-179 (WLRRRGGWTDVLKCV) match the BH2 motif. The helical transmembrane segment at 190–210 (WLVATLCSFGRFLKAAFFLLL) threads the bilayer.

It belongs to the Bcl-2 family. In terms of assembly, monomer; positively regulates apoptotic process. Homodimer. Heterodimer. Oligomer; promoted by apoptotic stimuli and BH3-only proteins; mediates constitutive activation. Interacts (via BH4 domain) with ITPR1; enhances BOK expression and stabilization; limits apoptosis and prevents ubiquitination and then degradation; protects ITPR1 from proteolysis by CASP3 during apoptosis. Interacts with ITPR2 and ITPR3; binds most strongly to ITPR2, and barely to ITPR3; regulates their expression. Interacts with XPO1; translocates to the cytoplasm. Interacts with BNIP3; promotes oligomerization. Post-translationally, ubiquitinated by AMFR/gp78 E3 ubiquitin ligase complex; mediates degradation by ubiquitin-proteasome pathway in a VCP/p97-dependent manner; prevents from proapoptotic activity; promotes degradation of newly synthesized proteins that are not ITPR1 associated. Widely expressed. Highly expressed in brain, kidney, and spleen.

Its subcellular location is the mitochondrion membrane. The protein resides in the endoplasmic reticulum membrane. The protein localises to the mitochondrion inner membrane. It localises to the cytoplasm. It is found in the nucleus. Its subcellular location is the mitochondrion. The protein resides in the endoplasmic reticulum. The protein localises to the mitochondrion outer membrane. It localises to the early endosome membrane. It is found in the recycling endosome membrane. Its subcellular location is the nucleus outer membrane. The protein resides in the golgi apparatus. The protein localises to the cis-Golgi network membrane. It localises to the trans-Golgi network membrane. It is found in the membrane. Functionally, apoptosis regulator that functions through different apoptotic signaling pathways. Plays a roles as pro-apoptotic protein that positively regulates intrinsic apoptotic process in a BAX- and BAK1-dependent manner or in a BAX- and BAK1-independent manner. In response to endoplasmic reticulum stress promotes mitochondrial apoptosis through downstream BAX/BAK1 activation and positive regulation of PERK-mediated unfolded protein response. Activates apoptosis independently of heterodimerization with survival-promoting BCL2 and BCL2L1 through induction of mitochondrial outer membrane permeabilization, in a BAX- and BAK1-independent manner, in response to inhibition of ERAD-proteasome degradation system, resulting in cytochrome c release. In response to DNA damage, mediates intrinsic apoptotic process in a TP53-dependent manner. Plays a role in granulosa cell apoptosis by CASP3 activation. Plays a roles as anti-apoptotic protein during neuronal apoptotic process, by negatively regulating poly ADP-ribose polymerase-dependent cell death through regulation of neuronal calcium homeostasis and mitochondrial bioenergetics in response to NMDA excitation. In addition to its role in apoptosis, may regulate trophoblast cell proliferation during the early stages of placental development, by acting on G1/S transition through regulation of CCNE1 expression. May also play a role as an inducer of autophagy by disrupting interaction between MCL1 and BECN1. In Mus musculus (Mouse), this protein is Bcl-2-related ovarian killer protein.